The primary structure comprises 301 residues: HTH-type transcriptional activator NagR (301 aa).

The HTH lysR-type domain occupies Ile-6–Thr-63. The H-T-H motif DNA-binding region spans Val-23–Lys-42.

This sequence belongs to the LysR transcriptional regulatory family.

In terms of biological role, may regulate the expression of the naphthalene (nagA-F) and salicylate (nagG-M) metabolism genes. This Ralstonia sp protein is HTH-type transcriptional activator NagR.